Here is a 308-residue protein sequence, read N- to C-terminus: Ribosomal RNA small subunit methyltransferase H (308 aa).

S-adenosyl-L-methionine contacts are provided by residues 34 to 36 (GGH), Asp-54, Phe-85, Asp-99, and Gln-106.

It belongs to the methyltransferase superfamily. RsmH family.

It is found in the cytoplasm. It carries out the reaction cytidine(1402) in 16S rRNA + S-adenosyl-L-methionine = N(4)-methylcytidine(1402) in 16S rRNA + S-adenosyl-L-homocysteine + H(+). Specifically methylates the N4 position of cytidine in position 1402 (C1402) of 16S rRNA. This is Ribosomal RNA small subunit methyltransferase H from Dichelobacter nodosus (strain VCS1703A).